The chain runs to 142 residues: Putative pterin-4-alpha-carbinolamine dehydratase (142 aa).

Belongs to the pterin-4-alpha-carbinolamine dehydratase family.

It catalyses the reaction (4aS,6R)-4a-hydroxy-L-erythro-5,6,7,8-tetrahydrobiopterin = (6R)-L-erythro-6,7-dihydrobiopterin + H2O. The polypeptide is Putative pterin-4-alpha-carbinolamine dehydratase (pcbd-1) (Caenorhabditis elegans).